Reading from the N-terminus, the 486-residue chain is MTHYIQGQWHAGKGHDVASINPANAQTIWTGKTATAEQVNAAVDAARAAQFDWFMLGFDARLAIVEAYRSQLEANKAELAETIAQETGKPQWETATEVGAMIGKIALSAAAYNKRTGTEANDTPAGRAVIRHKPHGVVAVFGPYNFPGHLPNGHIVPALLAGNTVIFKPSELTPKVAELMVSLWDKAGLPAGVLNLVQGEVDTGKALASHPQLDGLFFTGSSRTGHFLHQQYAGHPGKILALEMGGNNPLIIKGVQDIKAAVHDILQSAYISSGQRCTCARRLYVEQGEQGNALIAMLAAAVKQIKVGPWNAQPQPFMGSMISETAAKGMVAAQTNLQNLGGVSLVELTHLEAGTGLVSPGLIDVTAIDVLPDEEYFGPLLQLVRYSDFDQAIKLANQTRYGLSAGLLADSREDYDYFLARIRAGIVNWNKQITGASGAAPFGGVGASGNHRASAFYAADYCAYPVASVEADAVSLPATLSPGLSL.

Residue 220-225 coordinates NAD(+); that stretch reads GSSRTG. Catalysis depends on residues Glu243 and Cys277.

Belongs to the aldehyde dehydrogenase family. AstD subfamily.

It catalyses the reaction N-succinyl-L-glutamate 5-semialdehyde + NAD(+) + H2O = N-succinyl-L-glutamate + NADH + 2 H(+). It participates in amino-acid degradation; L-arginine degradation via AST pathway; L-glutamate and succinate from L-arginine: step 4/5. Catalyzes the NAD-dependent reduction of succinylglutamate semialdehyde into succinylglutamate. The chain is N-succinylglutamate 5-semialdehyde dehydrogenase from Shewanella baltica (strain OS185).